The sequence spans 378 residues: Cytochrome b (378 aa).

4 helical membrane-spanning segments follow: residues 34 to 54, 78 to 99, 114 to 134, and 179 to 199; these read FGSL…FLAM, WLLR…YLHV, WLIG…GYVL, and FFTF…IHLL. His84 and His98 together coordinate heme b. Residues His183 and His197 each contribute to the heme b site. His202 is an a ubiquinone binding site. The next 4 membrane-spanning stretches (helical) occupy residues 227–247, 289–309, 321–341, and 348–368; these read FKDI…VLIS, LGGV…PFYN, INQV…WIGA, and YVLI…VNPL.

This sequence belongs to the cytochrome b family. As to quaternary structure, the main subunits of complex b-c1 are: cytochrome b, cytochrome c1 and the Rieske protein. Requires heme b as cofactor.

It is found in the mitochondrion inner membrane. Functionally, component of the ubiquinol-cytochrome c reductase complex (complex III or cytochrome b-c1 complex) that is part of the mitochondrial respiratory chain. The b-c1 complex mediates electron transfer from ubiquinol to cytochrome c. Contributes to the generation of a proton gradient across the mitochondrial membrane that is then used for ATP synthesis. In Drosophila sechellia (Fruit fly), this protein is Cytochrome b (mt:Cyt-b).